The primary structure comprises 433 residues: Serine hydroxymethyltransferase (433 aa).

Ala121–Val123 contributes to the (6S)-5,6,7,8-tetrahydrofolate binding site. Lys227 bears the N6-(pyridoxal phosphate)lysine mark. Glu243 serves as a coordination point for (6S)-5,6,7,8-tetrahydrofolate.

The protein belongs to the SHMT family. In terms of assembly, homodimer. The cofactor is pyridoxal 5'-phosphate.

It localises to the cytoplasm. Its pathway is amino-acid biosynthesis; glycine biosynthesis; glycine from L-serine: step 1/1. Functionally, catalyzes the reversible interconversion of serine and glycine with a modified folate serving as the one-carbon carrier. Also exhibits a pteridine-independent aldolase activity toward beta-hydroxyamino acids, producing glycine and aldehydes, via a retro-aldol mechanism. The polypeptide is Serine hydroxymethyltransferase (Saccharolobus islandicus (strain Y.G.57.14 / Yellowstone #1) (Sulfolobus islandicus)).